A 422-amino-acid chain; its full sequence is F-box/WD repeat-containing protein 2 (422 aa).

The region spanning 54-101 (RDFLKLLPLELSFYLLKWLDPQTLLTCCLVSKQWNKVISACTEVWQTA) is the F-box domain. WD repeat units lie at residues 146–183 (GHSARVYALYYKDGLLCTGSDDLSAKLWDVSTGQCVYG), 185–221 (QTHTCAAVKFDEQKLVTGSFDNTVACWEWSSGARTQH), 224–265 (GHTG…NTLT), and 276–314 (LQKCKVKSLLHSPGDYILLSADKYEIKIWPIGREINCKC). Residue lysine 298 is modified to N6-acetyllysine.

Directly interacts with SKP1 and CUL1. Widely expressed during embryogenesis and in adult tissues.

Its function is as follows. Substrate-recognition component of the SCF (SKP1-CUL1-F-box protein)-type E3 ubiquitin ligase complex. This is F-box/WD repeat-containing protein 2 (Fbxw2) from Mus musculus (Mouse).